Reading from the N-terminus, the 1602-residue chain is Calmodulin-regulated spectrin-associated protein 1 (1602 aa).

Residues 216-331 (ESPAHQKVRY…FIAELFWWFE (116 aa)) form the Calponin-homology (CH) domain. Phosphoserine is present on residues Ser217, Ser371, Ser375, Ser416, and Ser431. Positions 426–471 (QKQQKSIQGEDIPDQRHRSNSLTRVDGQPRGAAIAWPEKKTRPASQ) are disordered. A Phosphothreonine modification is found at Thr512. A phosphoserine mark is found at Ser563, Ser575, and Ser589. Over residues 603-620 (AKEKQVITKEDERGEGRP) the composition is skewed to basic and acidic residues. The segment at 603-637 (AKEKQVITKEDERGEGRPRSIVSRRPSEGPQPLVR) is disordered. Phosphoserine occurs at positions 629, 722, 728, 738, and 740. The span at 772-789 (KLQEDMKVKEHEDKDDAS) shows a compositional bias: basic and acidic residues. Disordered stretches follow at residues 772–808 (KLQE…VSMA) and 825–870 (LNSC…GKDP). Composition is skewed to low complexity over residues 797 to 808 (STASQMSSVSMA) and 830 to 841 (TKSSTSSSQKTT). Over residues 857 to 869 (QKREQSPSQHGKD) the composition is skewed to basic and acidic residues. A sufficient for interaction with SPTBN1 region spans residues 871–892 (ASLLASELVQLHMQLEEKRRAI). 2 coiled-coil regions span residues 873 to 909 (LLAS…QRLK) and 1016 to 1048 (DVNE…QEQL). The segment at 903–922 (SARQRLKLGKAAFLHVVKKG) is sufficient for interaction with calmodulin. Disordered regions lie at residues 1075–1165 (FVEP…GKCL), 1206–1226 (KEVG…VEEP), and 1301–1448 (ARVR…DWET). Ser1080 is subject to Phosphoserine. Positions 1103–1114 (RPAELKVPKDRP) are enriched in basic and acidic residues. A compositionally biased stretch (polar residues) spans 1115 to 1127 (QGSSRSKTPTPSV). Low complexity predominate over residues 1206-1220 (KEVGSSSSDVSGKES). Residues 1291 to 1343 (LLKQQRKAEEARVRKQQLEAEVELKRDEARRKAEEDRVRKEEEKARRELIKQE) are a coiled coil. Residues 1301–1346 (ARVRKQQLEAEVELKRDEARRKAEEDRVRKEEEKARRELIKQEYLR) show a composition bias toward basic and acidic residues. Basic residues predominate over residues 1361–1372 (PKSKPKKPRPKS). The segment covering 1380-1392 (SDSGTKCSSTPDN) has biased composition (polar residues). Positions 1393-1410 (LSRTQSGSSLSLASAATT) are enriched in low complexity. 2 positions are modified to phosphoserine: Ser1398 and Ser1427. The CKK domain occupies 1463-1597 (GPKLFKEPSS…QPKRPAVPKK (135 aa)). Residue Tyr1537 is modified to Phosphotyrosine.

It belongs to the CAMSAP1 family. Interacts with spectrin via SPTBN1; the interaction is direct. Interacts with calmodulin; calcium-dependent it prevents interaction with spectrin.

It localises to the cytoplasm. The protein resides in the cytoskeleton. Its function is as follows. Key microtubule-organizing protein that specifically binds the minus-end of non-centrosomal microtubules and regulates their dynamics and organization. Specifically recognizes growing microtubule minus-ends and stabilizes microtubules. Acts on free microtubule minus-ends that are not capped by microtubule-nucleating proteins or other factors and protects microtubule minus-ends from depolymerization. In contrast to CAMSAP2 and CAMSAP3, tracks along the growing tips of minus-end microtubules without significantly affecting the polymerization rate: binds at the very tip of the microtubules minus-end and acts as a minus-end tracking protein (-TIP) that dissociates from microtubules after allowing tubulin incorporation. Through interaction with spectrin may regulate neurite outgrowth. This Homo sapiens (Human) protein is Calmodulin-regulated spectrin-associated protein 1 (CAMSAP1).